A 308-amino-acid chain; its full sequence is Pseudouridine-5'-phosphate glycosidase (308 aa).

The active-site Proton donor is the glutamate 28. Positions 89 and 109 each coordinate substrate. Aspartate 141 provides a ligand contact to Mn(2+). 143-145 (SAD) is a binding site for substrate. The active-site Nucleophile is the lysine 162.

It belongs to the pseudouridine-5'-phosphate glycosidase family. As to quaternary structure, homotrimer. Mn(2+) serves as cofactor.

It catalyses the reaction D-ribose 5-phosphate + uracil = psi-UMP + H2O. Catalyzes the reversible cleavage of pseudouridine 5'-phosphate (PsiMP) to ribose 5-phosphate and uracil. Functions biologically in the cleavage direction, as part of a pseudouridine degradation pathway. The protein is Pseudouridine-5'-phosphate glycosidase of Brachyspira hyodysenteriae (strain ATCC 49526 / WA1).